Reading from the N-terminus, the 248-residue chain is PF03932 family protein CutC (248 aa).

It belongs to the CutC family. As to quaternary structure, homodimer.

The protein resides in the cytoplasm. This Escherichia coli O7:K1 (strain IAI39 / ExPEC) protein is PF03932 family protein CutC.